A 555-amino-acid polypeptide reads, in one-letter code: Glucose-6-phosphate isomerase (555 aa).

The active-site Proton donor is Glu353. Active-site residues include His384 and Lys516.

The protein belongs to the GPI family.

It is found in the cytoplasm. The catalysed reaction is alpha-D-glucose 6-phosphate = beta-D-fructose 6-phosphate. The protein operates within carbohydrate biosynthesis; gluconeogenesis. Its pathway is carbohydrate degradation; glycolysis; D-glyceraldehyde 3-phosphate and glycerone phosphate from D-glucose: step 2/4. Functionally, catalyzes the reversible isomerization of glucose-6-phosphate to fructose-6-phosphate. This is Glucose-6-phosphate isomerase from Methylobacillus flagellatus (strain ATCC 51484 / DSM 6875 / VKM B-1610 / KT).